Consider the following 233-residue polypeptide: MGEPQQVSALPPPPMQYIKEYTDENIQEGLAPKPPPPIKDSYMMFGNQFQCDDLIIRPLESQGIERLHPMQFDHKKELRKLNMSILINFLDLLDILIRSPGSIKREEKLEDLKLLFVHVHHLINEYRPHQARETLRVMMEVQKRQRLETAERFQKHLERVIEMIQNCLASLPDDLPHSEAGMRVKTEPMDTDDSNNCIGQNEQQRENSGHRRDQIIEKDAALCVLIDEMNERP.

Lys185 participates in a covalent cross-link: Glycyl lysine isopeptide (Lys-Gly) (interchain with G-Cter in SUMO1); alternate. Residue Lys185 forms a Glycyl lysine isopeptide (Lys-Gly) (interchain with G-Cter in SUMO2); alternate linkage. The segment at 185–213 (KTEPMDTDDSNNCIGQNEQQRENSGHRRD) is disordered. At Ser194 the chain carries Phosphoserine. The span at 203 to 213 (QQRENSGHRRD) shows a compositional bias: basic and acidic residues.

This sequence belongs to the Mediator complex subunit 7 family. In terms of assembly, component of the Mediator complex, which is composed of MED1, MED4, MED6, MED7, MED8, MED9, MED10, MED11, MED12, MED13, MED13L, MED14, MED15, MED16, MED17, MED18, MED19, MED20, MED21, MED22, MED23, MED24, MED25, MED26, MED27, MED29, MED30, MED31, CCNC, CDK8 and CDC2L6/CDK11. The MED12, MED13, CCNC and CDK8 subunits form a distinct module termed the CDK8 module. Mediator containing the CDK8 module is less active than Mediator lacking this module in supporting transcriptional activation. Individual preparations of the Mediator complex lacking one or more distinct subunits have been variously termed ARC, CRSP, DRIP, PC2, SMCC and TRAP.

It is found in the nucleus. Functionally, component of the Mediator complex, a coactivator involved in the regulated transcription of nearly all RNA polymerase II-dependent genes. Mediator functions as a bridge to convey information from gene-specific regulatory proteins to the basal RNA polymerase II transcription machinery. Mediator is recruited to promoters by direct interactions with regulatory proteins and serves as a scaffold for the assembly of a functional preinitiation complex with RNA polymerase II and the general transcription factors. The sequence is that of Mediator of RNA polymerase II transcription subunit 7 (MED7) from Bos taurus (Bovine).